Consider the following 426-residue polypeptide: uncharacterized protein (426 aa).

This is an uncharacterized protein from Acidianus filamentous virus 1 (isolate United States/Yellowstone) (AFV-1).